Reading from the N-terminus, the 465-residue chain is Pancreatic triacylglycerol lipase (465 aa).

An N-terminal signal peptide occupies residues 1–16 (MLMLWTFAVLLGAVAG). Cystine bridges form between C20–C26 and C107–C118. The Nucleophile role is filled by S169. The Charge relay system role is filled by D193. Positions 204, 207, 209, and 212 each coordinate Ca(2+). The cysteines at positions 254 and 278 are disulfide-linked. H280 serves as the catalytic Charge relay system. 3 disulfides stabilise this stretch: C302–C313, C316–C321, and C449–C465. Positions 355-465 (WRYQVTVTLS…EDVLLTLSPC (111 aa)) constitute a PLAT domain.

It belongs to the AB hydrolase superfamily. Lipase family. Forms a 1:1 stoichiometric complex with (pro)colipase/CLPS. In terms of tissue distribution, pancreas.

Its subcellular location is the secreted. It catalyses the reaction a triacylglycerol + H2O = a diacylglycerol + a fatty acid + H(+). It carries out the reaction 1,2,3-tri-(9Z-octadecenoyl)-glycerol + H2O = di-(9Z)-octadecenoylglycerol + (9Z)-octadecenoate + H(+). The enzyme catalyses 1,2,3-tributanoylglycerol + H2O = dibutanoylglycerol + butanoate + H(+). The catalysed reaction is all-trans-retinyl hexadecanoate + H2O = all-trans-retinol + hexadecanoate + H(+). It catalyses the reaction 1,2-di-(9Z-octadecenoyl)-glycerol + H2O = (9Z-octadecenoyl)-glycerol + (9Z)-octadecenoate + H(+). With respect to regulation, inhibited by bile salts, is reactivated by (pro)colipase/CLPS. Functionally, plays an important role in fat metabolism. It preferentially splits the esters of long-chain fatty acids at positions 1 and 3, producing mainly 2-monoacylglycerol and free fatty acids, and shows considerably higher activity against insoluble emulsified substrates than against soluble ones. This Mus musculus (Mouse) protein is Pancreatic triacylglycerol lipase.